Consider the following 307-residue polypeptide: MNLKVKIGELTLKNPVMPASGTFGFGLEFKDIFDLKNLGALVVKTITKNPRLGNRPPRVYEVSCGMINSIGLANPGWDYFCEKILPQIKDLNDILILNIAGESVEEFQYLAREAQRFDEIKALELNVSCPNVSKGGIAFGTDLEALKQIVSSVRKIYSKTLIVKLTPNVTDITVYAKAAENAGADALTLINTFTGMVIDVKSKKPILGNKHGGVSGPAIRPMAVKMVYDCFKAVSIPIIGVGGIDSKEAALEFFLAGATAIQVGSQNFVEPGFMPRLIRELGEYLQEENIESIAKLTGLAHRGEENV.

FMN contacts are provided by residues serine 20 and 44–45 (KT). Substrate-binding positions include lysine 44 and 68–72 (NSIGL). FMN is bound by residues asparagine 98 and asparagine 126. Asparagine 126 is a substrate binding site. Cysteine 129 acts as the Nucleophile in catalysis. The FMN site is built by lysine 164 and isoleucine 190. 191 to 192 (NT) contacts substrate. FMN contacts are provided by residues glycine 216, 242-243 (GG), and 264-265 (GS).

This sequence belongs to the dihydroorotate dehydrogenase family. Type 1 subfamily. Heterotetramer of 2 PyrK and 2 PyrD type B subunits. The cofactor is FMN.

Its subcellular location is the cytoplasm. It catalyses the reaction (S)-dihydroorotate + NAD(+) = orotate + NADH + H(+). It participates in pyrimidine metabolism; UMP biosynthesis via de novo pathway; orotate from (S)-dihydroorotate (NAD(+) route): step 1/1. In terms of biological role, catalyzes the conversion of dihydroorotate to orotate with NAD(+) as electron acceptor. This Carboxydothermus hydrogenoformans (strain ATCC BAA-161 / DSM 6008 / Z-2901) protein is Dihydroorotate dehydrogenase B (NAD(+)), catalytic subunit (pyrD).